The primary structure comprises 219 residues: Probable 3-beta-hydroxysteroid-Delta(8),Delta(7)-isomerase (219 aa).

Transmembrane regions (helical) follow at residues 29–49 (ILVP…LISG), 62–82 (LMCW…TFVF), 119–139 (VEGI…YAIA), and 181–201 (FWAY…MIAI). One can recognise an EXPERA domain in the interval 58 to 200 (TDRWLMCWWA…SWVVIPTMIA (143 aa)).

This sequence belongs to the EBP family.

The protein resides in the endoplasmic reticulum membrane. It catalyses the reaction lathosterol = 5alpha-cholest-8-en-3beta-ol. It participates in steroid biosynthesis; sterol biosynthesis. Its function is as follows. Catalyzes the conversion of Delta(8)-sterols to their corresponding Delta(7)-isomers. The polypeptide is Probable 3-beta-hydroxysteroid-Delta(8),Delta(7)-isomerase (Oryza sativa subsp. japonica (Rice)).